The chain runs to 865 residues: Protein translocase subunit SecA (865 aa).

ATP-binding positions include glutamine 85, 103-107 (GEGKT), and aspartate 505. Zn(2+)-binding residues include cysteine 847, cysteine 849, cysteine 858, and histidine 859.

It belongs to the SecA family. Monomer and homodimer. Part of the essential Sec protein translocation apparatus which comprises SecA, SecYEG and auxiliary proteins SecDF. Other proteins may also be involved. The cofactor is Zn(2+).

The protein resides in the cell membrane. The protein localises to the cytoplasm. The catalysed reaction is ATP + H2O + cellular proteinSide 1 = ADP + phosphate + cellular proteinSide 2.. In terms of biological role, part of the Sec protein translocase complex. Interacts with the SecYEG preprotein conducting channel. Has a central role in coupling the hydrolysis of ATP to the transfer of proteins into and across the cell membrane, serving as an ATP-driven molecular motor driving the stepwise translocation of polypeptide chains across the membrane. The sequence is that of Protein translocase subunit SecA from Lactococcus lactis subsp. lactis (strain IL1403) (Streptococcus lactis).